A 198-amino-acid polypeptide reads, in one-letter code: Recombination protein RecR (198 aa).

The C4-type zinc-finger motif lies at 57 to 72 (CSICGNLTDDDPCHIC). Residues 80–175 (ETILVVEASK…KVTRLARGLA (96 aa)) enclose the Toprim domain.

Belongs to the RecR family.

May play a role in DNA repair. It seems to be involved in an RecBC-independent recombinational process of DNA repair. It may act with RecF and RecO. This Streptococcus equi subsp. zooepidemicus (strain MGCS10565) protein is Recombination protein RecR.